A 543-amino-acid chain; its full sequence is uncharacterized protein (543 aa).

In terms of domain architecture, PE spans 1 to 93 (MSFVTAAPEM…GGAYSSAEAA (93 aa)). A disordered region spans residues 194 to 214 (GGAGGPGGPTDVPAGTGGAGG).

The protein belongs to the mycobacterial PE family. PGRS subfamily.

This is an uncharacterized protein from Mycobacterium tuberculosis (strain CDC 1551 / Oshkosh).